The chain runs to 235 residues: Probable transcriptional regulatory protein JJD26997_0557 (235 aa).

This sequence belongs to the TACO1 family.

It localises to the cytoplasm. The sequence is that of Probable transcriptional regulatory protein JJD26997_0557 from Campylobacter jejuni subsp. doylei (strain ATCC BAA-1458 / RM4099 / 269.97).